The following is a 302-amino-acid chain: Probable E3 ubiquitin-protein ligase RZFP34 (302 aa).

Residues 54 to 130 (EGIMQYGCAH…VRQVCISCGV (77 aa)) form a CHY-type zinc finger. Zn(2+) contacts are provided by C61, H63, C74, C75, C81, C84, H85, H100, C112, C115, C125, C128, C137, C140, H153, C154, C157, C160, H170, C171, C174, C177, H186, and C188. Residues 132–196 (MGKYFCEVCK…ACVEGAMHHD (65 aa)) form a CTCHY-type zinc finger. The segment at 197-240 (CPICFEYLFESTNDVSVLPCGHTIHVKCLREMEEHCQFACPLCS) adopts an RING-type; atypical zinc-finger fold.

It localises to the nucleus. The enzyme catalyses S-ubiquitinyl-[E2 ubiquitin-conjugating enzyme]-L-cysteine + [acceptor protein]-L-lysine = [E2 ubiquitin-conjugating enzyme]-L-cysteine + N(6)-ubiquitinyl-[acceptor protein]-L-lysine.. It participates in protein modification; protein ubiquitination. In terms of biological role, possesses transactivation activity in yeast cells. Involved in the regulation of stomatal aperture. May modulate the expression of genes that control stomata opening during heat shock or drought stress. This is Probable E3 ubiquitin-protein ligase RZFP34 from Oryza sativa subsp. japonica (Rice).